The chain runs to 135 residues: Thioredoxin H5 (135 aa).

A Thioredoxin domain is found at 13 to 128 (EHLDYSGGNV…LQEKFEQLNR (116 aa)). Residues C54 and C57 each act as nucleophile in the active site. A disulfide bridge links C54 with C57.

This sequence belongs to the thioredoxin family. Plant H-type subfamily.

The protein resides in the cytoplasm. Probable thiol-disulfide oxidoreductase that may be involved in the redox regulation of a number of cytosolic enzymes. The chain is Thioredoxin H5 from Oryza sativa subsp. japonica (Rice).